We begin with the raw amino-acid sequence, 483 residues long: MFS-type transporter ppzB (483 aa).

A run of 5 helical transmembrane segments spans residues 18 to 38 (FILT…GILL), 62 to 82 (AFLA…GWAA), 96 to 116 (MFLV…LLVV), 149 to 169 (IGTI…LGGV), and 178 to 198 (AVFA…ALVI). A glycan (N-linked (GlcNAc...) asparagine) is linked at Asn-219. 6 helical membrane-spanning segments follow: residues 281–301 (LAML…ATVP), 310–330 (FSSL…FALG), 344–364 (AAAT…GLPE), 374–394 (VALF…VTSP), 424–444 (FGFS…LGGF), and 453–473 (VMGA…FLFV).

The protein belongs to the major facilitator superfamily. TCR/Tet family.

It is found in the membrane. Functionally, MFS-type transporter; part of the gene cluster that mediates the biosynthesis of pyrrolopyrazines, secondary metabolites showing insecticidal activity. Probably involved in the secretion of peramine and other pyrrolopyrazines. This is MFS-type transporter ppzB from Metarhizium rileyi (strain RCEF 4871) (Nomuraea rileyi).